Reading from the N-terminus, the 81-residue chain is Putative phytosulfokines 6 (81 aa).

An N-terminal signal peptide occupies residues 1-20 (MKQSLCLAVLFLILSTSSSA). The propeptide occupies 21–72 (IRRGKEDQEINPLVSATSVEEDSVNKLMGMEYCGEGDEECLRRRMMTESHLD). Sulfotyrosine is present on residues tyrosine 73 and tyrosine 75. A propeptide spanning residues 78-81 (HHKH) is cleaved from the precursor.

This sequence belongs to the phytosulfokine family. Sulfation is important for activity and for the binding to a putative membrane receptor. In terms of processing, PSK-beta is an enzymatic derivative of PSK-alpha. Expressed in roots, leaves, stems, flowers and siliques. Most abundant in vascular bundles and in root tips.

It is found in the secreted. Promotes plant cell differentiation, organogenesis and somatic embryogenesis as well as cell proliferation. The polypeptide is Putative phytosulfokines 6 (PSK6) (Arabidopsis thaliana (Mouse-ear cress)).